Reading from the N-terminus, the 157-residue chain is Baculoviral IAP repeat-containing protein 5.2-B (157 aa).

One copy of the BIR repeat lies at Arg31–Ala101. Residue Thr47 is modified to Phosphothreonine; by CDK1. Positions 70, 73, 90, and 97 each coordinate Zn(2+).

Belongs to the IAP family. As to quaternary structure, component of the CPC at least composed of survivin/birc5, incenp, cdca8/borealin and/or cdca9/dasra-A, and aurkb/aurora-B. Interacts directly with incenp (via N-terminus). Interacts with rxra; the interaction is stronger in the absence of 9-cis retinoic acids. Ubiquitination is required for centrosome-targeting. Exhibits strong and homogeneous expression in developing oocytes. In embryos, expressed in the animal hemisphere from one-cell to yolk plug stages, and highly expressed in the future brain and dorsal region of the neural tube at the neurula stage and early tail-bud stage. At tadpole stages, expression is restricted at a low level to the head region.

It localises to the cytoplasm. Its subcellular location is the nucleus. The protein localises to the chromosome. It is found in the centromere. The protein resides in the cytoskeleton. It localises to the spindle. Functionally, does not appear to exhibit anti-apoptotic activity. Plays a role in increasing blood vessel size during development. Component of the chromosomal passenger complex (CPC), a complex that acts as a key regulator of mitosis. The CPC complex has essential functions at the centromere in ensuring correct chromosome alignment and segregation and is required for chromatin-induced microtubule stabilization and spindle assembly. This chain is Baculoviral IAP repeat-containing protein 5.2-B (birc5.2-b), found in Xenopus laevis (African clawed frog).